The sequence spans 647 residues: Beta-galactosidase (647 aa).

An N-terminal signal peptide occupies residues 1 to 24 (MLRVPLCTPLPLLALLQLLGAAHG). The propeptide occupies 25-29 (IYNVT). Asn27 carries N-linked (GlcNAc...) asparagine glycosylation. Residues Tyr84, Glu130, and Asn188 each contribute to the substrate site. Glu189 acts as the Proton donor in catalysis. A disulfide bridge links Cys196 with Cys231. N-linked (GlcNAc...) asparagine glycosylation is present at Asn248. Glu269 acts as the Nucleophile in catalysis. Residue Tyr334 participates in substrate binding. 6 N-linked (GlcNAc...) asparagine glycosylation sites follow: Asn500, Asn504, Asn510, Asn544, Asn557, and Asn617. An intrachain disulfide couples Cys628 to Cys636.

The protein belongs to the glycosyl hydrolase 35 family. In terms of assembly, homodimer. May form higher multimers.

It localises to the lysosome. The catalysed reaction is Hydrolysis of terminal non-reducing beta-D-galactose residues in beta-D-galactosides.. Functionally, cleaves beta-linked terminal galactosyl residues from gangliosides, glycoproteins, and glycosaminoglycans. This is Beta-galactosidase (Glb1) from Mus musculus (Mouse).